A 239-amino-acid chain; its full sequence is Tetraspanin-9 (239 aa).

Topologically, residues 1-13 (MARGCLCCVKYMM) are cytoplasmic. The chain crosses the membrane as a helical span at residues 14–34 (FLFNLLFWLSGCGLLGVGIWL). Topologically, residues 35–55 (SVSQGSFATFSPSFPSLSAAN) are extracellular. A helical transmembrane segment spans residues 56-76 (LVITLGSVVMVTGFLGCLGAI). Over 77–85 (KENKCLLLS) the chain is Cytoplasmic. Residues 86–106 (FFIVLLIILLAELILLILFFV) traverse the membrane as a helical segment. Topologically, residues 107-203 (YTEKVSENAK…VEEWLNDNKH (97 aa)) are extracellular. Asn-180 is a glycosylation site (N-linked (GlcNAc...) asparagine). The helical transmembrane segment at 204 to 224 (LLGTIAMCVLVLQLLGMAFSM) threads the bilayer. Residues 225–239 (TLYQQIHRAGKKYDA) lie on the Cytoplasmic side of the membrane.

This sequence belongs to the tetraspanin (TM4SF) family.

The protein resides in the membrane. The sequence is that of Tetraspanin-9 (tspan9) from Danio rerio (Zebrafish).